Here is a 451-residue protein sequence, read N- to C-terminus: uncharacterized protein (451 aa).

Residues 2–60 (NLKVKQKIPLKIKRMGINGEGIGFYQKTLVFVPGALKGEDIYCQITSIRRNFVEAKLLK) form the TRAM domain. Residues cysteine 73, cysteine 79, cysteine 82, and cysteine 162 each coordinate [4Fe-4S] cluster. Residues glutamine 283, tyrosine 312, aspartate 333, and aspartate 381 each contribute to the S-adenosyl-L-methionine site. The active-site Nucleophile is the cysteine 408.

Belongs to the class I-like SAM-binding methyltransferase superfamily. RNA M5U methyltransferase family.

This is an uncharacterized protein from Streptococcus pneumoniae serotype 4 (strain ATCC BAA-334 / TIGR4).